A 310-amino-acid polypeptide reads, in one-letter code: Ribonuclease Z (310 aa).

His60, His62, Asp64, His65, His140, Asp209, and His269 together coordinate Zn(2+). Asp64 (proton acceptor) is an active-site residue.

The protein belongs to the RNase Z family. In terms of assembly, homodimer. Requires Zn(2+) as cofactor.

It carries out the reaction Endonucleolytic cleavage of RNA, removing extra 3' nucleotides from tRNA precursor, generating 3' termini of tRNAs. A 3'-hydroxy group is left at the tRNA terminus and a 5'-phosphoryl group is left at the trailer molecule.. Functionally, zinc phosphodiesterase, which displays some tRNA 3'-processing endonuclease activity. Probably involved in tRNA maturation, by removing a 3'-trailer from precursor tRNA. The polypeptide is Ribonuclease Z (Methanococcus maripaludis (strain C7 / ATCC BAA-1331)).